Here is a 432-residue protein sequence, read N- to C-terminus: Glutamate-1-semialdehyde 2,1-aminomutase 1 (432 aa).

K268 bears the N6-(pyridoxal phosphate)lysine mark.

This sequence belongs to the class-III pyridoxal-phosphate-dependent aminotransferase family. HemL subfamily. Homodimer. The cofactor is pyridoxal 5'-phosphate.

The protein resides in the cytoplasm. It carries out the reaction (S)-4-amino-5-oxopentanoate = 5-aminolevulinate. It functions in the pathway porphyrin-containing compound metabolism; protoporphyrin-IX biosynthesis; 5-aminolevulinate from L-glutamyl-tRNA(Glu): step 2/2. This is Glutamate-1-semialdehyde 2,1-aminomutase 1 from Bacillus cereus (strain B4264).